A 598-amino-acid chain; its full sequence is Probable polysaccharide biosynthesis protein EpsC (598 aa).

A run of 4 helical transmembrane segments spans residues 1 to 21 (MIIA…YQFL), 31 to 51 (GALL…AFLF), 63 to 83 (LGEL…TGVI), and 87 to 107 (VYHT…LLSI).

It belongs to the polysaccharide synthase family.

It localises to the cell membrane. Involved in biofilm formation. This is Probable polysaccharide biosynthesis protein EpsC (epsC) from Bacillus subtilis (strain 168).